A 120-amino-acid polypeptide reads, in one-letter code: Large ribosomal subunit protein uL18 (120 aa).

The protein belongs to the universal ribosomal protein uL18 family. As to quaternary structure, part of the 50S ribosomal subunit; part of the 5S rRNA/L5/L18/L25 subcomplex. Contacts the 5S and 23S rRNAs.

This is one of the proteins that bind and probably mediate the attachment of the 5S RNA into the large ribosomal subunit, where it forms part of the central protuberance. This is Large ribosomal subunit protein uL18 from Methylocella silvestris (strain DSM 15510 / CIP 108128 / LMG 27833 / NCIMB 13906 / BL2).